The chain runs to 353 residues: Abasic site processing protein HMCES (353 aa).

Cys2 (nucleophile) is an active-site residue. Cys2 is subject to Thiazolidine linkage to a ring-opened DNA abasic site. The active site involves Glu127. Glycyl lysine isopeptide (Lys-Gly) (interchain with G-Cter in SUMO2) cross-links involve residues Lys148 and Lys151. Ser160 bears the Phosphoserine mark. Glycyl lysine isopeptide (Lys-Gly) (interchain with G-Cter in SUMO2) cross-links involve residues Lys274 and Lys275. Residues 292 to 353 (TKSPKKEVPD…DEPVAKRPNS (62 aa)) are disordered. Phosphoserine is present on Ser294. The segment covering 295 to 307 (PKKEVPDSPKKDA) has biased composition (basic and acidic residues). Residue Lys305 forms a Glycyl lysine isopeptide (Lys-Gly) (interchain with G-Cter in SUMO2) linkage. Position 321 is a phosphoserine (Ser321). Positions 332 to 338 (SLLDRWL) match the PIP-box motif. Residues 336-353 (RWLKQEKEDEPVAKRPNS) show a composition bias toward basic and acidic residues. Residues Lys339 and Lys342 each participate in a glycyl lysine isopeptide (Lys-Gly) (interchain with G-Cter in SUMO2) cross-link.

It belongs to the SOS response-associated peptidase family. Interacts (via PIP-box motif) with PCNA. Post-translationally, ubiquitinated; the covalent HMCES DNA-protein cross-link is ubiquitinated, leading to its degradation by the proteasome.

The protein localises to the chromosome. With respect to regulation, formation and reversal of DNA-protein cross-link depends on DNA context. Catalyzes formation of the thiazolidine linkage in presence of abasic sites in single-stranded DNA. Mediates the reversal of the thiazolidine cross-link in presence of double stranded DNA. Its function is as follows. Sensor of abasic sites in single-stranded DNA (ssDNA) required to preserve genome integrity by promoting error-free repair of abasic sites. Acts as an enzyme that recognizes and binds abasic sites in ssDNA at replication forks and chemically modifies the lesion by forming a covalent cross-link with DNA: forms a stable thiazolidine linkage between a ring-opened abasic site and the alpha-amino and sulfhydryl substituents of its N-terminal catalytic cysteine residue. Promotes error-free repair by protecting abasic sites from translesion synthesis (TLS) polymerases and endonucleases that are error-prone and would generate mutations and double-strand breaks. The HMCES DNA-protein cross-link is then either reversed or degraded. HMCES is able to catalyze the reversal of its thiazolidine cross-link and cycle between a cross-link and a non-cross-linked state depending on DNA context: mediates self-reversal of the thiazolidine cross-link in double stranded DNA, allowing APEX1 to initiate downstream repair of abasic sites. The HMCES DNA-protein cross-link can also be degraded by the SPRTN metalloprotease following unfolding by the BRIP1/FANCJ helicase. Has preference for ssDNA, but can also accommodate double-stranded DNA with 3' or 5' overhang (dsDNA), and dsDNA-ssDNA 3' junction. Plays a protective role during somatic hypermutation of immunoglobulin genes in B-cells: acts via its ability to form covalent cross-links with abasic sites, thereby limiting the accumulation of deletions in somatic hypermutation target regions. Also involved in class switch recombination (CSR) in B-cells independently of the formation of a DNA-protein cross-link: acts by binding and protecting ssDNA overhangs to promote DNA double-strand break repair through the microhomology-mediated alternative-end-joining (Alt-EJ) pathway. Acts as a protease: mediates autocatalytic processing of its N-terminal methionine in order to expose the catalytic cysteine. The sequence is that of Abasic site processing protein HMCES from Rattus norvegicus (Rat).